Reading from the N-terminus, the 861-residue chain is Bifunctional uridylyltransferase/uridylyl-removing enzyme (861 aa).

Positions 1-321 are uridylyltransferase; it reads MKNDNRIIKN…VYHQKQKIIR (321 aa). The segment at 322 to 678 is uridylyl-removing; the sequence is LDDEFQLSNR…IMPHHSQGGT (357 aa). The HD domain maps to 440-562; that stretch reads VDQHTLFVIR…LPHARYLDYL (123 aa). 2 consecutive ACT domains span residues 679 to 760 and 788 to 861; these read EVFI…AVSR and QLFL…KSKY.

It belongs to the GlnD family. Requires Mg(2+) as cofactor.

It carries out the reaction [protein-PII]-L-tyrosine + UTP = [protein-PII]-uridylyl-L-tyrosine + diphosphate. The catalysed reaction is [protein-PII]-uridylyl-L-tyrosine + H2O = [protein-PII]-L-tyrosine + UMP + H(+). Uridylyltransferase (UTase) activity is inhibited by glutamine, while glutamine activates uridylyl-removing (UR) activity. In terms of biological role, modifies, by uridylylation and deuridylylation, the PII regulatory proteins (GlnB and homologs), in response to the nitrogen status of the cell that GlnD senses through the glutamine level. Under low glutamine levels, catalyzes the conversion of the PII proteins and UTP to PII-UMP and PPi, while under higher glutamine levels, GlnD hydrolyzes PII-UMP to PII and UMP (deuridylylation). Thus, controls uridylylation state and activity of the PII proteins, and plays an important role in the regulation of nitrogen assimilation and metabolism. This is Bifunctional uridylyltransferase/uridylyl-removing enzyme from Legionella pneumophila (strain Paris).